Reading from the N-terminus, the 365-residue chain is Probable dual-specificity RNA methyltransferase RlmN (365 aa).

Glu99 serves as the catalytic Proton acceptor. One can recognise a Radical SAM core domain in the interval 105–344 (QSYGLSVCVT…CVVRQEHGTD (240 aa)). Cys112 and Cys349 form a disulfide bridge. 3 residues coordinate [4Fe-4S] cluster: Cys119, Cys123, and Cys126. Residues 171–172 (GE), Ser203, 227–229 (SLH), and Asn305 each bind S-adenosyl-L-methionine. The S-methylcysteine intermediate role is filled by Cys349.

It belongs to the radical SAM superfamily. RlmN family. [4Fe-4S] cluster is required as a cofactor.

The protein localises to the cytoplasm. The enzyme catalyses adenosine(2503) in 23S rRNA + 2 reduced [2Fe-2S]-[ferredoxin] + 2 S-adenosyl-L-methionine = 2-methyladenosine(2503) in 23S rRNA + 5'-deoxyadenosine + L-methionine + 2 oxidized [2Fe-2S]-[ferredoxin] + S-adenosyl-L-homocysteine. It catalyses the reaction adenosine(37) in tRNA + 2 reduced [2Fe-2S]-[ferredoxin] + 2 S-adenosyl-L-methionine = 2-methyladenosine(37) in tRNA + 5'-deoxyadenosine + L-methionine + 2 oxidized [2Fe-2S]-[ferredoxin] + S-adenosyl-L-homocysteine. Its function is as follows. Specifically methylates position 2 of adenine 2503 in 23S rRNA and position 2 of adenine 37 in tRNAs. The protein is Probable dual-specificity RNA methyltransferase RlmN of Lactococcus lactis subsp. cremoris (strain SK11).